The sequence spans 142 residues: Large ribosomal subunit protein uL13 (142 aa).

It belongs to the universal ribosomal protein uL13 family. Part of the 50S ribosomal subunit.

Its function is as follows. This protein is one of the early assembly proteins of the 50S ribosomal subunit, although it is not seen to bind rRNA by itself. It is important during the early stages of 50S assembly. The polypeptide is Large ribosomal subunit protein uL13 (Cupriavidus metallidurans (strain ATCC 43123 / DSM 2839 / NBRC 102507 / CH34) (Ralstonia metallidurans)).